Consider the following 396-residue polypeptide: Methionine import ATP-binding protein MetN 2 (396 aa).

One can recognise an ABC transporter domain in the interval 41-280 (VSFELVGKVF…PRHGATRALL (240 aa)). 77-84 (GRSGAGKS) serves as a coordination point for ATP.

The protein belongs to the ABC transporter superfamily. Methionine importer (TC 3.A.1.24) family. The complex is composed of two ATP-binding proteins (MetN), two transmembrane proteins (MetI) and a solute-binding protein (MetQ).

The protein localises to the cell inner membrane. The catalysed reaction is L-methionine(out) + ATP + H2O = L-methionine(in) + ADP + phosphate + H(+). It carries out the reaction D-methionine(out) + ATP + H2O = D-methionine(in) + ADP + phosphate + H(+). Part of the ABC transporter complex MetNIQ involved in methionine import. Responsible for energy coupling to the transport system. The protein is Methionine import ATP-binding protein MetN 2 of Burkholderia pseudomallei (strain 1710b).